Consider the following 333-residue polypeptide: Ketol-acid reductoisomerase (NADP(+)) (333 aa).

The KARI N-terminal Rossmann domain maps to 2–182 (AKIYYDEDAS…GATRAGVIET (181 aa)). Residues 25–28 (YGSQ), Ser51, Ser53, and 83–86 (DTVQ) each bind NADP(+). His108 is a catalytic residue. An NADP(+)-binding site is contributed by Gly134. One can recognise a KARI C-terminal knotted domain in the interval 183–327 (TFKEETETDL…EELRKMMPWL (145 aa)). Mg(2+)-binding residues include Asp191, Glu195, Glu227, and Glu231. A substrate-binding site is contributed by Ser252.

It belongs to the ketol-acid reductoisomerase family. Requires Mg(2+) as cofactor.

The enzyme catalyses (2R)-2,3-dihydroxy-3-methylbutanoate + NADP(+) = (2S)-2-acetolactate + NADPH + H(+). It carries out the reaction (2R,3R)-2,3-dihydroxy-3-methylpentanoate + NADP(+) = (S)-2-ethyl-2-hydroxy-3-oxobutanoate + NADPH + H(+). It participates in amino-acid biosynthesis; L-isoleucine biosynthesis; L-isoleucine from 2-oxobutanoate: step 2/4. It functions in the pathway amino-acid biosynthesis; L-valine biosynthesis; L-valine from pyruvate: step 2/4. Involved in the biosynthesis of branched-chain amino acids (BCAA). Catalyzes an alkyl-migration followed by a ketol-acid reduction of (S)-2-acetolactate (S2AL) to yield (R)-2,3-dihydroxy-isovalerate. In the isomerase reaction, S2AL is rearranged via a Mg-dependent methyl migration to produce 3-hydroxy-3-methyl-2-ketobutyrate (HMKB). In the reductase reaction, this 2-ketoacid undergoes a metal-dependent reduction by NADPH to yield (R)-2,3-dihydroxy-isovalerate. The polypeptide is Ketol-acid reductoisomerase (NADP(+)) (Aquifex aeolicus (strain VF5)).